Here is a 671-residue protein sequence, read N- to C-terminus: DNA ligase (671 aa).

Residues 36-40 (DAEYD), 85-86 (SL), and glutamate 116 each bind NAD(+). The active-site N6-AMP-lysine intermediate is lysine 118. 4 residues coordinate NAD(+): arginine 139, glutamate 176, lysine 292, and lysine 316. Residues cysteine 410, cysteine 413, cysteine 428, and cysteine 434 each coordinate Zn(2+). In terms of domain architecture, BRCT spans 591–671 (QKGGRFQGMT…QFLAMFSEKE (81 aa)).

This sequence belongs to the NAD-dependent DNA ligase family. LigA subfamily. Requires Mg(2+) as cofactor. Mn(2+) serves as cofactor.

It catalyses the reaction NAD(+) + (deoxyribonucleotide)n-3'-hydroxyl + 5'-phospho-(deoxyribonucleotide)m = (deoxyribonucleotide)n+m + AMP + beta-nicotinamide D-nucleotide.. Functionally, DNA ligase that catalyzes the formation of phosphodiester linkages between 5'-phosphoryl and 3'-hydroxyl groups in double-stranded DNA using NAD as a coenzyme and as the energy source for the reaction. It is essential for DNA replication and repair of damaged DNA. This chain is DNA ligase, found in Acidithiobacillus ferrooxidans (strain ATCC 23270 / DSM 14882 / CIP 104768 / NCIMB 8455) (Ferrobacillus ferrooxidans (strain ATCC 23270)).